Reading from the N-terminus, the 23-residue chain is Septenin 2a (23 aa).

Expressed in skin glands.

The protein localises to the secreted. Its function is as follows. May act as an antimicrobial peptide. The protein is Septenin 2a of Osteopilus septentrionalis (Cuban treefrog).